A 613-amino-acid polypeptide reads, in one-letter code: Kelch-like protein 36 (613 aa).

Residues 45–112 (CDVVLVVEEQ…LYSSELELDG (68 aa)) enclose the BTB domain. Positions 147–249 (YLYLQELASI…PEDILLQRVK (103 aa)) constitute a BACK domain. Kelch repeat units lie at residues 294–343 (CLLF…VLGG), 344–395 (FIFV…SIED), 396–442 (MLVA…IYKD), 444–491 (VYIS…SLGD), 492–544 (SIYS…VWQG), and 545–593 (RIYI…VCAL).

As to quaternary structure, interacts with CUL3.

It functions in the pathway protein modification; protein ubiquitination. Probable substrate-specific adapter of an E3 ubiquitin-protein ligase complex which mediates the ubiquitination and subsequent proteasomal degradation of target proteins. This chain is Kelch-like protein 36 (Klhl36), found in Rattus norvegicus (Rat).